A 278-amino-acid chain; its full sequence is 4-diphosphocytidyl-2-C-methyl-D-erythritol kinase (278 aa).

The active site involves K9. Residue 93 to 103 participates in ATP binding; sequence PLGGGLGGGSS. The active site involves D135.

Belongs to the GHMP kinase family. IspE subfamily.

It carries out the reaction 4-CDP-2-C-methyl-D-erythritol + ATP = 4-CDP-2-C-methyl-D-erythritol 2-phosphate + ADP + H(+). The protein operates within isoprenoid biosynthesis; isopentenyl diphosphate biosynthesis via DXP pathway; isopentenyl diphosphate from 1-deoxy-D-xylulose 5-phosphate: step 3/6. Catalyzes the phosphorylation of the position 2 hydroxy group of 4-diphosphocytidyl-2C-methyl-D-erythritol. In Nitrosomonas europaea (strain ATCC 19718 / CIP 103999 / KCTC 2705 / NBRC 14298), this protein is 4-diphosphocytidyl-2-C-methyl-D-erythritol kinase.